The primary structure comprises 193 residues: Ion-translocating oxidoreductase complex subunit A (193 aa).

6 helical membrane-spanning segments follow: residues 5 to 25 (LLLF…FLGL), 47 to 67 (FVMT…LIPL), 72 to 92 (LRTL…EMVV), 102 to 122 (LLGI…VALL), 134 to 154 (ALYG…FAAI), and 171 to 191 (AIAL…SGLV).

Belongs to the NqrDE/RnfAE family. As to quaternary structure, the complex is composed of six subunits: RsxA, RsxB, RsxC, RsxD, RsxE and RsxG.

Its subcellular location is the cell inner membrane. In terms of biological role, part of a membrane-bound complex that couples electron transfer with translocation of ions across the membrane. Required to maintain the reduced state of SoxR. The sequence is that of Ion-translocating oxidoreductase complex subunit A from Salmonella arizonae (strain ATCC BAA-731 / CDC346-86 / RSK2980).